Reading from the N-terminus, the 331-residue chain is MGSVKDLVVLKEPAEKPGLGRFIFSNRYSVFDYGEMPDKIEDKGRALCMVTAYFFEKLEEAGIATHYLGLVEGGKVRRFDEVENAVNEMEVKLVRVIKPKNGDYSIFKTLKGNFLVPLEIIYRNSIPEGSSLLRRIERGEAKPEDFGLTKIEAGMRLERPIVDFSTKLEDVDRYLSHSEAKEISGLSDEEFEALKELVVKVDEIITREVSKAGLINEDGKIEVALDDERNLMVVDAVGTPDECRFSFDGFEVSKELLREYYRKTEWYDKVRQLKGQEGWREAVGLPPPLPDEVREGVSNLYRAFCNEVTGRKFFDAPKLKEVVSQLKEVLE.

It belongs to the SAICAR synthetase family. Highly divergent.

The enzyme catalyses 5-amino-1-(5-phospho-D-ribosyl)imidazole-4-carboxylate + L-aspartate + ATP = (2S)-2-[5-amino-1-(5-phospho-beta-D-ribosyl)imidazole-4-carboxamido]succinate + ADP + phosphate + 2 H(+). Its pathway is purine metabolism; IMP biosynthesis via de novo pathway; 5-amino-1-(5-phospho-D-ribosyl)imidazole-4-carboxamide from 5-amino-1-(5-phospho-D-ribosyl)imidazole-4-carboxylate: step 1/2. This chain is Putative phosphoribosylaminoimidazole-succinocarboxamide synthase (purC), found in Archaeoglobus fulgidus (strain ATCC 49558 / DSM 4304 / JCM 9628 / NBRC 100126 / VC-16).